A 255-amino-acid chain; its full sequence is Octanoyltransferase (255 aa).

The 185-residue stretch at 54 to 238 (GDANELVWLL…SFTTIFGATV (185 aa)) folds into the BPL/LPL catalytic domain. Substrate contacts are provided by residues 92–99 (RGGQLTYH), 167–169 (AIG), and 180–182 (GIA). The active-site Acyl-thioester intermediate is the Cys198.

This sequence belongs to the LipB family.

It localises to the cytoplasm. The catalysed reaction is octanoyl-[ACP] + L-lysyl-[protein] = N(6)-octanoyl-L-lysyl-[protein] + holo-[ACP] + H(+). The protein operates within protein modification; protein lipoylation via endogenous pathway; protein N(6)-(lipoyl)lysine from octanoyl-[acyl-carrier-protein]: step 1/2. In terms of biological role, catalyzes the transfer of endogenously produced octanoic acid from octanoyl-acyl-carrier-protein onto the lipoyl domains of lipoate-dependent enzymes. Lipoyl-ACP can also act as a substrate although octanoyl-ACP is likely to be the physiological substrate. The polypeptide is Octanoyltransferase (Rhodopseudomonas palustris (strain BisB5)).